The primary structure comprises 34 residues: Trypsin inhibitor 2 (34 aa).

A cross-link (cyclopeptide (Ser-Gly)) is located at residues 1-34 (SGSDGGVCPKILKKCRRDSDCPGACICRGNGYCG). Residues 4–5 (DG) constitute a cross-link ((2-aminosuccinimidyl)acetic acid (Asp-Gly); alternate). A cross-link (isoaspartyl glycine isopeptide (Asp-Gly); alternate) is located at residues 4–5 (DG). 3 disulfide bridges follow: cysteine 8–cysteine 25, cysteine 15–cysteine 27, and cysteine 21–cysteine 33.

Post-translationally, a cyclic succinimide probably forms by loss of water between Asp-4 and Gly-5, that can then rehydrate to either the original peptide bond or to a beta-aspartyl isopeptide bond. Three isoforms of MCoTI-II are detected, two with the parent molecular weight, corresponding to the unmodified and proposed isopeptide forms, and one with a molecular weight 18 Da lower, corresponding to a succinimide cross-linked form. In terms of processing, this is a cyclic peptide.

It localises to the secreted. Inhibits trypsin; probably participates in a plant defense mechanism. This is Trypsin inhibitor 2 from Momordica cochinchinensis (Spiny bitter cucumber).